The sequence spans 344 residues: Heat-inducible transcription repressor HrcA (344 aa).

Belongs to the HrcA family.

Functionally, negative regulator of class I heat shock genes (grpE-dnaK-dnaJ and groELS operons). Prevents heat-shock induction of these operons. The sequence is that of Heat-inducible transcription repressor HrcA from Streptococcus equi subsp. zooepidemicus (strain H70).